We begin with the raw amino-acid sequence, 256 residues long: Protein RGF1 INDUCIBLE TRANSCRIPTION FACTOR 1 (256 aa).

The segment at 21-59 (CPYHETAKKNERNVCCLDCCTSLCPHCVPSHRFHRLLQV) adopts a B box-type zinc-finger fold.

As to expression, expressed predominantly in root meristematic zones.

It is found in the nucleus. Probable transcription factor that plays a central role in mediating RGF1 hormone peptide signaling leading to the production of reactive oxygen species (ROS) in roots to modulate meristem size and root growth, probably via oxidative post-translational modification of the transcription factor PLETHORA (e.g. PLT1 and PLT2). The chain is Protein RGF1 INDUCIBLE TRANSCRIPTION FACTOR 1 from Arabidopsis thaliana (Mouse-ear cress).